The sequence spans 92 residues: Small ribosomal subunit protein uS19 (92 aa).

This sequence belongs to the universal ribosomal protein uS19 family.

Protein S19 forms a complex with S13 that binds strongly to the 16S ribosomal RNA. This chain is Small ribosomal subunit protein uS19, found in Streptococcus agalactiae serotype Ia (strain ATCC 27591 / A909 / CDC SS700).